The following is a 578-amino-acid chain: ER degradation-enhancing alpha-mannosidase-like protein 2 (578 aa).

An N-terminal signal peptide occupies residues Met-1 to Gly-21. 4 N-linked (GlcNAc...) asparagine glycosylation sites follow: Asn-90, Asn-112, Asn-289, and Asn-450. The interval Lys-517–Ser-557 is disordered. The segment covering Glu-538–Pro-548 has biased composition (basic and acidic residues).

It belongs to the glycosyl hydrolase 47 family. N-glycosylated. Expressed ubiquitously in all tissues tested with slightly higher levels detected in small intestine and peripheral blood leukocytes and weakest levels in brain and skeletal muscle.

The protein localises to the endoplasmic reticulum lumen. In terms of biological role, involved in the endoplasmic reticulum-associated degradation (ERAD) pathway that targets misfolded glycoproteins for degradation in an N-glycan-dependent manner. May initiate ERAD by promoting the first mannose trimming step of ERAD substrates, from Man9GlcNAc2 to Man8GlcNAc2. Seems to recognize and bind to exposed hydrophobic regions in target proteins. This Homo sapiens (Human) protein is ER degradation-enhancing alpha-mannosidase-like protein 2 (EDEM2).